Here is a 313-residue protein sequence, read N- to C-terminus: Ribosomal RNA small subunit methyltransferase H (313 aa).

S-adenosyl-L-methionine contacts are provided by residues 31 to 33, D51, F77, D95, and Q102; that span reads GGH.

Belongs to the methyltransferase superfamily. RsmH family.

The protein resides in the cytoplasm. It catalyses the reaction cytidine(1402) in 16S rRNA + S-adenosyl-L-methionine = N(4)-methylcytidine(1402) in 16S rRNA + S-adenosyl-L-homocysteine + H(+). Its function is as follows. Specifically methylates the N4 position of cytidine in position 1402 (C1402) of 16S rRNA. This is Ribosomal RNA small subunit methyltransferase H from Xylella fastidiosa (strain 9a5c).